Reading from the N-terminus, the 261-residue chain is Phosphoinositide-3-kinase-interacting protein 1 (261 aa).

An N-terminal signal peptide occupies residues 1 to 21 (MLLAWVRTILVSNMLLAEAYG). At 22 to 166 (SGGCFWDNGH…NSKEKKDLGT (145 aa)) the chain is on the extracellular side. A Kringle domain is found at 24-101 (GCFWDNGHLY…EKRPCQDLRC (78 aa)). 3 disulfides stabilise this stretch: C25–C101, C46–C82, and C70–C96. The segment covering 90–101 (APEKRPCQDLRC) has biased composition (basic and acidic residues). Residues 90–122 (APEKRPCQDLRCPDTTSQGLPTSATETEEAAEV) are disordered. A helical membrane pass occupies residues 167-187 (LGYVLGITMMVIIVVIGAGIV). At 188–261 (LGYTYKRGKD…LMGQAGTPGA (74 aa)) the chain is on the cytoplasmic side.

It localises to the cell membrane. Functionally, negative regulator of hepatic phosphatidylinositol 3-kinase (PI3K) activity. In Bos taurus (Bovine), this protein is Phosphoinositide-3-kinase-interacting protein 1 (PIK3IP1).